The following is a 530-amino-acid chain: Arginine--tRNA ligase (530 aa).

Residues 113 to 123 carry the 'HIGH' region motif; the sequence is ANPTGPLHIGH.

Belongs to the class-I aminoacyl-tRNA synthetase family. As to quaternary structure, monomer.

The protein localises to the cytoplasm. The catalysed reaction is tRNA(Arg) + L-arginine + ATP = L-arginyl-tRNA(Arg) + AMP + diphosphate. The chain is Arginine--tRNA ligase from Campylobacter jejuni subsp. jejuni serotype O:2 (strain ATCC 700819 / NCTC 11168).